We begin with the raw amino-acid sequence, 74 residues long: Large ribosomal subunit protein uL14c (74 aa).

Belongs to the universal ribosomal protein uL14 family. In terms of assembly, part of the 50S ribosomal subunit.

The protein resides in the plastid. It is found in the chloroplast. Its function is as follows. Binds to 23S rRNA. The polypeptide is Large ribosomal subunit protein uL14c (rpl14) (Oenothera ammophila (Evening primerose)).